The chain runs to 68 residues: Sec-independent protein translocase protein TatA (68 aa).

The helical transmembrane segment at Met1 to Gly21 threads the bilayer. The interval Glu46 to Arg68 is disordered. The span at Lys53–Arg68 shows a compositional bias: basic and acidic residues.

This sequence belongs to the TatA/E family. The Tat system comprises two distinct complexes: a TatABC complex, containing multiple copies of TatA, TatB and TatC subunits, and a separate TatA complex, containing only TatA subunits. Substrates initially bind to the TatABC complex, which probably triggers association of the separate TatA complex to form the active translocon.

It is found in the cell inner membrane. Functionally, part of the twin-arginine translocation (Tat) system that transports large folded proteins containing a characteristic twin-arginine motif in their signal peptide across membranes. TatA could form the protein-conducting channel of the Tat system. The sequence is that of Sec-independent protein translocase protein TatA from Sinorhizobium fredii (strain NBRC 101917 / NGR234).